The following is an 81-amino-acid chain: Small ribosomal subunit protein bS20 (81 aa).

The protein belongs to the bacterial ribosomal protein bS20 family.

Functionally, binds directly to 16S ribosomal RNA. The protein is Small ribosomal subunit protein bS20 of Mycoplasma mycoides subsp. mycoides SC (strain CCUG 32753 / NCTC 10114 / PG1).